Here is a 356-residue protein sequence, read N- to C-terminus: Outer membrane protein Omp38 (356 aa).

The N-terminal stretch at 1–19 is a signal peptide; that stretch reads MKLSRIALATMLVAAPLAA. Residues 221–339 enclose the OmpA-like domain; the sequence is ELTEDLNMEL…RVFATITGSR (119 aa). Meso-2,6-diaminopimelate is bound by residues Asn-237, Asp-271, Thr-273, Asn-279, and Arg-286.

Belongs to the outer membrane OOP (TC 1.B.6) superfamily. As to quaternary structure, homotrimer. Forms a pore with a size of 1.3 nm.

Its subcellular location is the cell outer membrane. It localises to the host mitochondrion. Functions as a porin. Induces apoptosis in human cell lines through caspase-dependent and AIF-dependent pathways. Purified Omp38 enters host cell and localizes to the mitochondria, which presumably leads to a release of proapoptotic molecules such as cytochrome c and AIF (apoptosis-inducing factor). Binds peptidoglycan, contributes to cell wall maintenance. The protein is Outer membrane protein Omp38 of Acinetobacter baumannii (strain ATCC 19606 / DSM 30007 / JCM 6841 / CCUG 19606 / CIP 70.34 / NBRC 109757 / NCIMB 12457 / NCTC 12156 / 81).